The following is a 486-amino-acid chain: UDP-N-acetylmuramate--L-alanine ligase (486 aa).

Position 129-135 (129-135 (GTHGKTT)) interacts with ATP.

Belongs to the MurCDEF family.

It localises to the cytoplasm. It catalyses the reaction UDP-N-acetyl-alpha-D-muramate + L-alanine + ATP = UDP-N-acetyl-alpha-D-muramoyl-L-alanine + ADP + phosphate + H(+). The protein operates within cell wall biogenesis; peptidoglycan biosynthesis. In terms of biological role, cell wall formation. This chain is UDP-N-acetylmuramate--L-alanine ligase, found in Vibrio vulnificus (strain YJ016).